A 393-amino-acid polypeptide reads, in one-letter code: Formate-dependent phosphoribosylglycinamide formyltransferase (393 aa).

N(1)-(5-phospho-beta-D-ribosyl)glycinamide-binding positions include 17-18 (EL) and Glu77. Residues Arg109, Lys150, 155–160 (SSGKGQ), 190–193 (EEFL), and Glu198 contribute to the ATP site. The region spanning 114-304 (DLAAGELGLR…EFELHLRAVL (191 aa)) is the ATP-grasp domain. The Mg(2+) site is built by Glu263 and Glu275. Residues Asp282, Lys354, and 361 to 362 (RR) contribute to the N(1)-(5-phospho-beta-D-ribosyl)glycinamide site.

Belongs to the PurK/PurT family. Homodimer.

The enzyme catalyses N(1)-(5-phospho-beta-D-ribosyl)glycinamide + formate + ATP = N(2)-formyl-N(1)-(5-phospho-beta-D-ribosyl)glycinamide + ADP + phosphate + H(+). It functions in the pathway purine metabolism; IMP biosynthesis via de novo pathway; N(2)-formyl-N(1)-(5-phospho-D-ribosyl)glycinamide from N(1)-(5-phospho-D-ribosyl)glycinamide (formate route): step 1/1. Its function is as follows. Involved in the de novo purine biosynthesis. Catalyzes the transfer of formate to 5-phospho-ribosyl-glycinamide (GAR), producing 5-phospho-ribosyl-N-formylglycinamide (FGAR). Formate is provided by PurU via hydrolysis of 10-formyl-tetrahydrofolate. The chain is Formate-dependent phosphoribosylglycinamide formyltransferase from Synechococcus sp. (strain RCC307).